The chain runs to 1823 residues: WD repeat-containing protein DDB_G0292056 (1823 aa).

The segment at 1–68 is disordered; the sequence is MTYNNNNNYL…IGNSSGGGGV (68 aa). The span at 16–61 shows a compositional bias: low complexity; the sequence is TSTSTSTSTSTPTSTKTSPLNTSSSSNILKSNSRNPSPNNPTNIGN. 6 WD repeats span residues 138–177, 182–222, 228–267, 270–310, 312–354, and 360–405; these read QSKW…YPLL, SHQR…KAVK, SHIL…QELN, VHSA…PKST, ITSN…YSTP, and GHTD…KDLF. Disordered stretches follow at residues 418–461, 530–562, 649–687, 714–778, 805–840, 883–940, 966–996, 1014–1058, and 1122–1186; these read PTTT…LLST, QPDD…NNNN, NITE…GFLK, IDIS…YRPG, ILTN…TNDQ, IPNN…SSTS, SSSS…NPPR, NNIT…NDNP, and QQLV…NGKS. 2 stretches are compositionally biased toward low complexity: residues 419–432 and 440–461; these read TTTT…TTTT and LNES…LLST. Composition is skewed to low complexity over residues 654 to 680 and 717 to 748; these read NNNN…NNNN and SQQQ…QQQQ. 2 stretches are compositionally biased toward polar residues: residues 749-768 and 827-840; these read FLTA…SPTS and MNAS…TNDQ. Low complexity-rich tracts occupy residues 885–926, 966–993, 1014–1041, and 1127–1183; these read NNNK…SSNN, SSSS…KNIN, NNIT…NRLN, and SSSP…NNGN. A WD 7 repeat occupies 1207–1250; that stretch reads ANSYILSGKPVEEICKYNSELAEKENRKDLVKLWNTLGMITDSK. 3 disordered regions span residues 1264 to 1307, 1697 to 1725, and 1764 to 1823; these read SHFG…LHQS, QQQP…HTHN, and PQQE…MFSN. Residues 1282 to 1293 are compositionally biased toward low complexity; the sequence is STGIASSTGSNS. Positions 1710-1725 are enriched in polar residues; sequence MSGTSHYHQQQPHTHN.

The sequence is that of WD repeat-containing protein DDB_G0292056 from Dictyostelium discoideum (Social amoeba).